A 314-amino-acid polypeptide reads, in one-letter code: MKKKIAEYEVGEQVDVFLLIKTATKGLASNGKPFLTVILQDPSGDIEAKLWDVSPEVEKQYVAETIVKVAGDILNYKGRIQLRVKQIRVANENEVTDISDFVEKAPVKKEDMVEKITQYIFEMRNPNIQRLTRHLLNKHQNEFLEYPAATKNHHEFVSGLAYHVVSMLDLAKAISNLYPSLDKDLLYAGVILHDLGKVIELSGPISTTYTLEGNLLGHISIMVNEIGKAADELNIDAEEVLILQHIVLSHHGKAEWGSPKPPLVKEAEILHYIDNLDAKMNMMDRALGRTKPGEYTERVFALDNRSFYKPTFHN.

The HD domain maps to 163-279 (HVVSMLDLAK…LHYIDNLDAK (117 aa)).

The protein belongs to the YhaM family.

Its function is as follows. Shows a 3'-5' exoribonuclease activity. The polypeptide is 3'-5' exoribonuclease YhaM (Bacillus cereus (strain G9842)).